A 360-amino-acid polypeptide reads, in one-letter code: Alanine racemase (360 aa).

K33 functions as the Proton acceptor; specific for D-alanine in the catalytic mechanism. Residue K33 is modified to N6-(pyridoxal phosphate)lysine. A substrate-binding site is contributed by R129. Y253 acts as the Proton acceptor; specific for L-alanine in catalysis. M301 lines the substrate pocket.

Belongs to the alanine racemase family. It depends on pyridoxal 5'-phosphate as a cofactor.

The catalysed reaction is L-alanine = D-alanine. Its pathway is amino-acid biosynthesis; D-alanine biosynthesis; D-alanine from L-alanine: step 1/1. Catalyzes the interconversion of L-alanine and D-alanine. May also act on other amino acids. The chain is Alanine racemase (alr) from Xanthomonas campestris pv. campestris (strain 8004).